A 503-amino-acid polypeptide reads, in one-letter code: Maturase K (503 aa).

The protein belongs to the intron maturase 2 family. MatK subfamily.

The protein resides in the plastid. Its subcellular location is the chloroplast. Its function is as follows. Usually encoded in the trnK tRNA gene intron. Probably assists in splicing its own and other chloroplast group II introns. This is Maturase K from Panax ginseng (Korean ginseng).